The primary structure comprises 148 residues: Hemoglobin subunit beta (148 aa).

The 146-residue stretch at 3–148 (XWTDXERHVI…AVAALGKQYH (146 aa)) folds into the Globin domain. Heme b-binding residues include His64 and His93.

This sequence belongs to the globin family. In terms of assembly, heterotetramer of two alpha chains and two beta chains. Red blood cells.

Its function is as follows. Involved in oxygen transport from gills to the various peripheral tissues. In Silurus asotus (Amur catfish), this protein is Hemoglobin subunit beta (hbb).